Here is a 156-residue protein sequence, read N- to C-terminus: Small ribosomal subunit protein uS7c (156 aa).

The protein belongs to the universal ribosomal protein uS7 family. In terms of assembly, part of the 30S ribosomal subunit.

The protein resides in the plastid. The protein localises to the chloroplast. One of the primary rRNA binding proteins, it binds directly to 16S rRNA where it nucleates assembly of the head domain of the 30S subunit. The polypeptide is Small ribosomal subunit protein uS7c (rps7) (Chlorella vulgaris (Green alga)).